Reading from the N-terminus, the 237-residue chain is MSKHQKKEVEVEFEKDDPKAVYLELFDKDTELKSLSDEIEKLTGEKDLELMKCDKDIYKSAEPLYRERRALLLEIPDFWATIFTNLFLKLGFVDELTMCVDDFFVEDTETEFRLFIDFRENDIISNKQVIITVTTPTTSEELSQEVKISTTPIELKQNKTETEKKNKDSKKSTDDEDEDEDDDEISGFLKFLLNPTKDIATFIVGSVWSNPIDSFCNDDDEDYDGLIASDSEGEEDK.

The span at 141–152 (ELSQEVKISTTP) shows a compositional bias: polar residues. 2 disordered regions span residues 141-182 (ELSQ…DEDD) and 214-237 (SFCN…EEDK). Basic and acidic residues predominate over residues 156-173 (KQNKTETEKKNKDSKKST).

This sequence belongs to the nucleosome assembly protein (NAP) family.

The polypeptide is Protein set homolog (set) (Dictyostelium discoideum (Social amoeba)).